A 175-amino-acid polypeptide reads, in one-letter code: NADH-ubiquinone oxidoreductase chain 6 (175 aa).

6 consecutive transmembrane segments (helical) span residues 1–21 (MMYI…GFSS), 24–44 (SPVY…GIIM), 51–71 (LGLV…GYTI), 87–107 (VVLS…VWLF), 112–132 (ELVG…EGGF), and 148–168 (CGFW…FIAT).

The protein belongs to the complex I subunit 6 family. Core subunit of respiratory chain NADH dehydrogenase (Complex I) which is composed of 45 different subunits.

Its subcellular location is the mitochondrion inner membrane. The catalysed reaction is a ubiquinone + NADH + 5 H(+)(in) = a ubiquinol + NAD(+) + 4 H(+)(out). Its function is as follows. Core subunit of the mitochondrial membrane respiratory chain NADH dehydrogenase (Complex I) which catalyzes electron transfer from NADH through the respiratory chain, using ubiquinone as an electron acceptor. Essential for the catalytic activity and assembly of complex I. This is NADH-ubiquinone oxidoreductase chain 6 (MT-ND6) from Elephas maximus (Indian elephant).